Reading from the N-terminus, the 475-residue chain is Aspartyl/glutamyl-tRNA(Asn/Gln) amidotransferase subunit B (475 aa).

It belongs to the GatB/GatE family. GatB subfamily. Heterotrimer of A, B and C subunits.

The enzyme catalyses L-glutamyl-tRNA(Gln) + L-glutamine + ATP + H2O = L-glutaminyl-tRNA(Gln) + L-glutamate + ADP + phosphate + H(+). The catalysed reaction is L-aspartyl-tRNA(Asn) + L-glutamine + ATP + H2O = L-asparaginyl-tRNA(Asn) + L-glutamate + ADP + phosphate + 2 H(+). Functionally, allows the formation of correctly charged Asn-tRNA(Asn) or Gln-tRNA(Gln) through the transamidation of misacylated Asp-tRNA(Asn) or Glu-tRNA(Gln) in organisms which lack either or both of asparaginyl-tRNA or glutaminyl-tRNA synthetases. The reaction takes place in the presence of glutamine and ATP through an activated phospho-Asp-tRNA(Asn) or phospho-Glu-tRNA(Gln). This Staphylococcus haemolyticus (strain JCSC1435) protein is Aspartyl/glutamyl-tRNA(Asn/Gln) amidotransferase subunit B.